We begin with the raw amino-acid sequence, 431 residues long: Ribonuclease TTHA0252 (431 aa).

His-59, His-61, Asp-63, His-64, His-141, Asp-162, and His-400 together coordinate Zn(2+).

The protein belongs to the metallo-beta-lactamase superfamily. RNA-metabolizing metallo-beta-lactamase-like family. As to quaternary structure, monomer. The cofactor is Zn(2+).

It is found in the cytoplasm. With respect to regulation, inhibited by cadmium, cobalt, manganese, magnesium, calcium and nickel ions. Functionally, has endoribonuclease activity towards 23S and 16S rRNA (in vitro). The polypeptide is Ribonuclease TTHA0252 (Thermus thermophilus (strain ATCC 27634 / DSM 579 / HB8)).